A 321-amino-acid polypeptide reads, in one-letter code: MSRKLRTLMAALCALPLAFAAAPPAHAADPTTMTNGFYADPDSSASRWAAANPGDGRAAAINASIANTPMARWFGSWSGAIGTAAGAYAGAADGRDKLPILVAYNIYNRDYCGGHSAGGAASPSAYADWIARFAGGIAARPAVVILEPDSLGDYGCMNPAQIDEREAMLTNALVQFNRQAPNTWVYMDAGNPRWADAATMARRLHEAGLRQAHGFSLNVSNYITTAENTAYGNAVNNELAARYGYTKPFVVDTSRNGNGSNGEWCNPSGRRIGTPTRTGGGAEMLLWIKTPGESDGNCGVGSGSTAGQFLPEVAYKMIYGY.

A signal peptide spans 1-27 (MSRKLRTLMAALCALPLAFAAAPPAHA). Asp110 is a catalytic residue. A disulfide bond links Cys112 and Cys156. Asp149 (proton donor) is an active-site residue. Asp295 functions as the Nucleophile in the catalytic mechanism.

It belongs to the glycosyl hydrolase 6 (cellulase B) family.

It carries out the reaction Endohydrolysis of (1-&gt;4)-beta-D-glucosidic linkages in cellulose, lichenin and cereal beta-D-glucans.. Implicated in the mechanism of induction exerted by cellobiose. The chain is Endoglucanase 1 (celA1) from Streptomyces halstedii.